The sequence spans 771 residues: MDVVSPELNSLLPDEIMDTEAMDEDPPASHLTPPPQSAPESAQVPMETEVPEIISICPTTASMQAISTNAKSTTSSTTQLLLTPSSSSSTTTKNATPTLPKIPSLSVPPNHQLIINKVAADGKSPGGAVIKQEGQKLLVAGLSKTGQPIMLALPHAWNKPATSQGSGDAKSQPTQIKMVTAMGKPVIAVSSASQLVASSTPLQAQHLKTLQITKKPPVSTAGPMITKLIITKALNNKVLSSPGSVSPVVTGRVVSQSTPLTPPRTIAIGETISTVPQNAATNSKVAISPLKSPSKLTVVSVTSQSSNSPQKSMTLPLNVALGQQILTVQQSAVTSPAKAGSSQSTTQTVKPVQTVTVPTSQFKTIIPLTTPPNVQQIQVPGSRFHYVRLVTATTGSSTVQTGGSTNTNPSIQPAKPVMMNAAVRMSVPIVPAQTAKQVVPKPLSSAAQVVTTSQTPQRLIMPATHLPQIQPNLTNLPPGTVLAPAHGSGNVGYAVLPAPYVTQIPQPAFVTLTSSSTFSTATPSQAQARLSLNGLSTSEANSRPRKPCNCTRSQCLKLYCDCFANGEFCNNCNCVNCFNNLDHESERLKAIKACLDRNPVAFKPKIGKGKEGESDRRHSKGCNCKKSGCLKNYCECYEAKIMCSSICKCMGCKNFEESPERKTLMHLADAAEVRVQQQTAAKTKLSSQISDLLTRTTPAITSGGGKLPYTFVTKEVAEATCDCLLEQAEQAELTNQPQAMAERLILEEFGRCLHRIISFAGKAKTDCPINC.

2 disordered regions span residues 21–44 (AMDE…SAQV) and 68–105 (TNAK…IPSL). The span at 72-92 (STTSSTTQLLLTPSSSSSTTT) shows a compositional bias: low complexity. Phosphoserine is present on residues serine 288, serine 292, and serine 308. The CRC domain occupies 544–657 (PRKPCNCTRS…KCMGCKNFEE (114 aa)). Positions 546-559 (KPCNCTRSQCLKLY) are DNA-binding. The Zn(2+) site is built by cysteine 548, cysteine 550, cysteine 555, cysteine 560, cysteine 562, cysteine 569, cysteine 572, cysteine 574, and cysteine 577. The interval 606 to 619 (IGKGKEGESDRRHS) is linker. 9 residues coordinate Zn(2+): cysteine 622, cysteine 624, cysteine 629, cysteine 634, cysteine 636, cysteine 643, cysteine 647, cysteine 649, and cysteine 652. Residues 622–635 (CNCKKSGCLKNYCE) form a DNA-binding region.

It belongs to the lin-54 family. As to quaternary structure, component of the DREAM complex.

Its subcellular location is the nucleus. Its function is as follows. Component of the DREAM complex, a multiprotein complex that can both act as a transcription activator or repressor depending on the context. Specifically recognizes the consensus motif 5'-TTYRAA-3' in target DNA. The sequence is that of Protein lin-54 homolog (lin54) from Danio rerio (Zebrafish).